A 681-amino-acid chain; its full sequence is MASKYERILSDCRSKNVLWEDPDFPAVQSSVFYYQTPPFTFQWKRIMDLADSGSGAVAANSSAAPVFLNESAEFDVVPGKMGDRWLVSCLGLLSSLRNLFYRVVPADQTLASAHGVFRFRLWWCGEWVEVLVDDRLPTINGRLAFMQPQASNCFWAALLEKAIAKLHGSYEALKYGTRSDGLTDLLGGVVRQMPILSDNIRPQTLKELLTTTCIVTCLADKSATVAKKNLAERMPNGILVNVNYRLSSLDKVKTLMGDSVQLVCLKDTFSSKPFGEKTHFLGDWSPMSKTWERVSQVERARLIRQLGPGEFWLSFCDFVEIFSTMEVVYLDTETSNDEEMLKSRPLHWKMKMHQGQWKRGVTAGGCRNHESFHINPQLLISVQDEQDLVIALNQHTAVEPKVIGFTMYTWDGEYMLSECLQKDFFKNHVSYLNSDYGNTRHVSYHTHLEAGHYVLIPTTYEPAEEAHFTVRILGTGSFRLSCLETQTMILLDPFPALKSTDAERCGGPKVKSVCQYEPVYMQLADENKTINCFELHELLEACLPNDYIKGCANIDICRQVIALQDRSGSGRITFQQFKTFMVNLKSWQGVFKMYTKEKAGILRAERLRDALCDIGFQLSTDIMNCLIQRYIRKDGTLRLSDFVSAVIHLTTAFNQFHLKNYGQVNVIEVHLHDWIKSILSC.

Residues 18–331 enclose the Calpain catalytic domain; sequence LWEDPDFPAV…FSTMEVVYLD (314 aa). Residues 332–481 are domain III; the sequence is TETSNDEEML…ILGTGSFRLS (150 aa). The tract at residues 482 to 514 is linker; that stretch reads CLETQTMILLDPFPALKSTDAERCGGPKVKSVC. Residues 515–681 form a domain IV region; it reads QYEPVYMQLA…HDWIKSILSC (167 aa). In terms of domain architecture, EF-hand spans 552 to 587; that stretch reads ANIDICRQVIALQDRSGSGRITFQQFKTFMVNLKSW. Ca(2+) is bound by residues aspartate 565, serine 567, serine 569, and arginine 571.

This sequence belongs to the peptidase C2 family. In terms of tissue distribution, localized to the salivary glands in the larva.

Its subcellular location is the cytoplasm. Not known; does not seem to have protease activity. This chain is Calpain-C, found in Drosophila melanogaster (Fruit fly).